We begin with the raw amino-acid sequence, 301 residues long: Probable aspartoacylase (301 aa).

Zn(2+)-binding residues include histidine 13 and glutamate 16. Substrate contacts are provided by residues arginine 54 and 61–62 (NR). Residue histidine 105 coordinates Zn(2+). Substrate is bound by residues glutamate 163 and tyrosine 273.

It belongs to the AspA/AstE family. Aspartoacylase subfamily. It depends on Zn(2+) as a cofactor.

It catalyses the reaction an N-acyl-L-aspartate + H2O = a carboxylate + L-aspartate. The protein is Probable aspartoacylase of Prochlorococcus marinus (strain MIT 9312).